The primary structure comprises 396 residues: Ribosomal RNA large subunit methyltransferase I (396 aa).

In terms of domain architecture, PUA spans 2–79 (AVRIKLKPGR…REEEIDREFF (78 aa)).

The protein belongs to the methyltransferase superfamily. RlmI family.

It is found in the cytoplasm. It carries out the reaction cytidine(1962) in 23S rRNA + S-adenosyl-L-methionine = 5-methylcytidine(1962) in 23S rRNA + S-adenosyl-L-homocysteine + H(+). Functionally, specifically methylates the cytosine at position 1962 (m5C1962) of 23S rRNA. In Shewanella sp. (strain MR-4), this protein is Ribosomal RNA large subunit methyltransferase I.